The primary structure comprises 792 residues: Protocadherin beta-18 (792 aa).

The signal sequence occupies residues 1–26; that stretch reads MAARGSCVSRQRQVLFLFLLGGLCLA. Cadherin domains are found at residues 27 to 133, 134 to 242, 243 to 347, 348 to 451, 452 to 561, and 568 to 676; these read GSEL…SPIF, QDKK…APQF, PQEL…APEL, IMSS…APAF, NQTS…APFV, and ASAP…LPEV. N-linked (GlcNAc...) asparagine glycosylation is present at Asn169. N-linked (GlcNAc...) asparagine glycosylation is found at Asn418 and Asn452. Residues 693–713 traverse the membrane as a helical segment; that stretch reads VIALASVSSLFLLSVLLFVGV.

Its subcellular location is the cell membrane. In terms of biological role, potential calcium-dependent cell-adhesion protein. In Mus musculus (Mouse), this protein is Protocadherin beta-18 (Pcdhb18).